The chain runs to 294 residues: RNA polymerase sigma-K factor (294 aa).

A propeptide spanning residues 1–20 (MVTGVFAALGFVVKELVFLV) is cleaved from the precursor. Residues 1–156 (MVTGVFAALG…VNNCFFIFKS (156 aa)) form an encoded by spoIVCB region. The Polymerase core binding signature appears at 79 to 92 (DLISIGTIGLIKGI). The segment at 114–165 (EIVITKGGCIHPSLIRFNIYGVRIHNGNFFHDKVNNCFFIFKSMPPLFVMNN) is not present in recombined mature factor. The encoded by spoIIIC stretch occupies residues 157–294 (MPPLFVMNNE…KEKRKKAKGK (138 aa)). The segment at residues 251-270 (QREIAKELGISRSYVSRIEK) is a DNA-binding region (H-T-H motif).

Belongs to the sigma-70 factor family.

In terms of biological role, sigma factors are initiation factors that promote the attachment of RNA polymerase to specific initiation sites and are then released. This sigma factor is responsible for the expression of sporulation specific genes in the mother cell. The chain is RNA polymerase sigma-K factor (sigK) from Bacillus subtilis (strain 168).